Here is a 1287-residue protein sequence, read N- to C-terminus: DENN domain-containing protein 5A (1287 aa).

A uDENN domain is found at 57–259 (STTEGENFEQ…EVPLPPPGRS (203 aa)). S193 carries the phosphoserine modification. A cDENN domain is found at 278 to 414 (ELPLFDFPVK…LEFVQEVSEI (137 aa)). One can recognise a dDENN domain in the interval 416 to 598 (MAFGVPPEGN…IMCHDDDDKD (183 aa)). The RUN 1 domain occupies 787 to 950 (VEENTLIASL…DYFCFTNVFT (164 aa)). Residues 954–1062 (IPYHILIVPS…DDGSLERVLV (109 aa)) enclose the PLAT domain. T1079 bears the Phosphothreonine mark. A phosphoserine mark is found at S1085, S1087, and S1096. Residues 1134–1280 (TLLLCGECGL…QEFNITLDTS (147 aa)) enclose the RUN 2 domain.

This sequence belongs to the RAB6IP1 family. As to quaternary structure, interacts with RAB6A bound to GTP.

Its subcellular location is the golgi apparatus membrane. Guanine nucleotide exchange factor (GEF) which may activate RAB6A and RAB39A and/or RAB39B. Promotes the exchange of GDP to GTP, converting inactive GDP-bound Rab proteins into their active GTP-bound form. Involved in the negative regulation of neurite outgrowth. This is DENN domain-containing protein 5A (Dennd5a) from Mus musculus (Mouse).